The chain runs to 495 residues: Fibronectin type III and SPRY domain-containing protein 1 (495 aa).

A coiled-coil region spans residues 4–99 (QKESLRKIIT…ALESSEELLE (96 aa)). The region spanning 105-162 (LCSSENDSFTQAAKDIKDSVTMAPAFRLSLKAKASDSMNHMMVDFTHERNLLQSITFL) is the COS domain. The Fibronectin type-III domain maps to 164–268 (VPATPEIHVA…EPVTLETHAF (105 aa)). A B30.2/SPRY domain is found at 281–476 (LKVEDLSVEW…VQTGLQVPSI (196 aa)). Residues 306–332 (KNRTNSPMHSPARTAMMSPKRAPSARV) form a disordered region. At S490 the chain carries Phosphoserine.

As to quaternary structure, oligomerization is required for binding to microtubules.

It localises to the cytoplasm. It is found in the cytoskeleton. Its subcellular location is the microtubule organizing center. The protein resides in the centrosome. The protein localises to the nucleus. It localises to the cleavage furrow. Functionally, may be involved in microtubule organization and stabilization. This Danio rerio (Zebrafish) protein is Fibronectin type III and SPRY domain-containing protein 1 (fsd1).